Consider the following 333-residue polypeptide: Glycerol-3-phosphate dehydrogenase [NAD(P)+] (333 aa).

NADPH is bound by residues Ser10, Trp11, His31, Arg32, and Lys105. 3 residues coordinate sn-glycerol 3-phosphate: Lys105, Gly136, and Ser138. Ala140 contacts NADPH. Sn-glycerol 3-phosphate contacts are provided by Lys191, Asp244, Ser254, Arg255, and Asn256. The active-site Proton acceptor is the Lys191. Arg255 contributes to the NADPH binding site. Val279 and Glu281 together coordinate NADPH.

Belongs to the NAD-dependent glycerol-3-phosphate dehydrogenase family.

The protein localises to the cytoplasm. It catalyses the reaction sn-glycerol 3-phosphate + NAD(+) = dihydroxyacetone phosphate + NADH + H(+). It carries out the reaction sn-glycerol 3-phosphate + NADP(+) = dihydroxyacetone phosphate + NADPH + H(+). Its pathway is membrane lipid metabolism; glycerophospholipid metabolism. Catalyzes the reduction of the glycolytic intermediate dihydroxyacetone phosphate (DHAP) to sn-glycerol 3-phosphate (G3P), the key precursor for phospholipid synthesis. In Chlorobium limicola (strain DSM 245 / NBRC 103803 / 6330), this protein is Glycerol-3-phosphate dehydrogenase [NAD(P)+].